The primary structure comprises 244 residues: 3-deoxy-manno-octulosonate cytidylyltransferase (244 aa).

This sequence belongs to the KdsB family.

Its subcellular location is the cytoplasm. The catalysed reaction is 3-deoxy-alpha-D-manno-oct-2-ulosonate + CTP = CMP-3-deoxy-beta-D-manno-octulosonate + diphosphate. The protein operates within nucleotide-sugar biosynthesis; CMP-3-deoxy-D-manno-octulosonate biosynthesis; CMP-3-deoxy-D-manno-octulosonate from 3-deoxy-D-manno-octulosonate and CTP: step 1/1. It functions in the pathway bacterial outer membrane biogenesis; lipopolysaccharide biosynthesis. Its function is as follows. Activates KDO (a required 8-carbon sugar) for incorporation into bacterial lipopolysaccharide in Gram-negative bacteria. This chain is 3-deoxy-manno-octulosonate cytidylyltransferase, found in Synechococcus elongatus (strain ATCC 33912 / PCC 7942 / FACHB-805) (Anacystis nidulans R2).